We begin with the raw amino-acid sequence, 136 residues long: Protein PsiE (136 aa).

4 helical membrane-spanning segments follow: residues 15–35 (ILQTVLNLGLLCLGLILVVFL), 55–75 (YELVEGLVVYFLYFEFIALIV), 82–102 (FHFPLRYFVYIGITAIVRLII), and 108–128 (PLDVLIYSAAILLLVITLWLC).

This sequence belongs to the PsiE family.

The protein resides in the cell inner membrane. The polypeptide is Protein PsiE (Escherichia coli (strain UTI89 / UPEC)).